We begin with the raw amino-acid sequence, 457 residues long: Putative metabolite transport protein YwtG (457 aa).

12 consecutive transmembrane segments (helical) span residues 7–27 (IWLY…TGVI), 38–58 (LGLN…GAIL), 75–95 (AIMA…LAPN), 97–117 (GVMV…TTIV), 136–156 (LNQL…YIFA), 163–183 (WMLG…LFMP), 240–260 (ALIA…NTII), 276–296 (ASIL…LVAI), 309–329 (LFGN…NLFF), 340–360 (VICL…VVWV), 377–397 (VSTL…PILM), and 400–420 (IGIS…FLFV). A disordered region spans residues 438–457 (DLRDKNGQGGAAGKQQTVGT).

This sequence belongs to the major facilitator superfamily. Sugar transporter (TC 2.A.1.1) family.

Its subcellular location is the cell membrane. This chain is Putative metabolite transport protein YwtG (ywtG), found in Bacillus subtilis (strain 168).